Here is a 709-residue protein sequence, read N- to C-terminus: Elongation factor G (709 aa).

One can recognise a tr-type G domain in the interval 10 to 295; the sequence is NQVRNIGIMA…AVVDYLPSPE (286 aa). GTP-binding positions include 19 to 26, 91 to 95, and 145 to 148; these read AHIDAGKT, DTPGH, and NKMD.

The protein belongs to the TRAFAC class translation factor GTPase superfamily. Classic translation factor GTPase family. EF-G/EF-2 subfamily.

The protein localises to the cytoplasm. Functionally, catalyzes the GTP-dependent ribosomal translocation step during translation elongation. During this step, the ribosome changes from the pre-translocational (PRE) to the post-translocational (POST) state as the newly formed A-site-bound peptidyl-tRNA and P-site-bound deacylated tRNA move to the P and E sites, respectively. Catalyzes the coordinated movement of the two tRNA molecules, the mRNA and conformational changes in the ribosome. This Bifidobacterium animalis subsp. lactis (strain AD011) protein is Elongation factor G.